Here is a 212-residue protein sequence, read N- to C-terminus: NAD(P)H-quinone oxidoreductase subunit K, chloroplastic (212 aa).

Residues Cys43, Cys44, Cys108, and Cys139 each coordinate [4Fe-4S] cluster.

This sequence belongs to the complex I 20 kDa subunit family. NDH is composed of at least 16 different subunits, 5 of which are encoded in the nucleus. It depends on [4Fe-4S] cluster as a cofactor.

The protein resides in the plastid. It localises to the chloroplast thylakoid membrane. The enzyme catalyses a plastoquinone + NADH + (n+1) H(+)(in) = a plastoquinol + NAD(+) + n H(+)(out). It carries out the reaction a plastoquinone + NADPH + (n+1) H(+)(in) = a plastoquinol + NADP(+) + n H(+)(out). NDH shuttles electrons from NAD(P)H:plastoquinone, via FMN and iron-sulfur (Fe-S) centers, to quinones in the photosynthetic chain and possibly in a chloroplast respiratory chain. The immediate electron acceptor for the enzyme in this species is believed to be plastoquinone. Couples the redox reaction to proton translocation, and thus conserves the redox energy in a proton gradient. This is NAD(P)H-quinone oxidoreductase subunit K, chloroplastic from Phaseolus vulgaris (Kidney bean).